The chain runs to 490 residues: Betaine aldehyde dehydrogenase (490 aa).

Asp93 contributes to the K(+) binding site. Position 150–152 (150–152 (GAW)) interacts with NAD(+). Lys162 (charge relay system) is an active-site residue. Residue 176–179 (KPSE) coordinates NAD(+). Val180 lines the K(+) pocket. 230 to 233 (GIAS) lines the NAD(+) pocket. Leu246 is a K(+) binding site. The active-site Proton acceptor is the Glu252. The NAD(+) site is built by Gly254, Cys286, and Glu387. The active-site Nucleophile is Cys286. Cys286 bears the Cysteine sulfenic acid (-SOH) mark. Positions 457 and 460 each coordinate K(+). The active-site Charge relay system is the Glu464.

This sequence belongs to the aldehyde dehydrogenase family. As to quaternary structure, dimer of dimers. It depends on K(+) as a cofactor.

The enzyme catalyses betaine aldehyde + NAD(+) + H2O = glycine betaine + NADH + 2 H(+). The protein operates within amine and polyamine biosynthesis; betaine biosynthesis via choline pathway; betaine from betaine aldehyde: step 1/1. Involved in the biosynthesis of the osmoprotectant glycine betaine. Catalyzes the irreversible oxidation of betaine aldehyde to the corresponding acid. The protein is Betaine aldehyde dehydrogenase of Pectobacterium carotovorum subsp. carotovorum (strain PC1).